Reading from the N-terminus, the 104-residue chain is L-rhamnose mutarotase (104 aa).

Tyrosine 18 serves as a coordination point for substrate. Residue histidine 22 is the Proton donor of the active site. Residues tyrosine 41 and 76 to 77 (WW) contribute to the substrate site.

The protein belongs to the rhamnose mutarotase family. In terms of assembly, homodimer.

The protein localises to the cytoplasm. The enzyme catalyses alpha-L-rhamnose = beta-L-rhamnose. Its pathway is carbohydrate metabolism; L-rhamnose metabolism. In terms of biological role, involved in the anomeric conversion of L-rhamnose. In Klebsiella pneumoniae (strain 342), this protein is L-rhamnose mutarotase.